The sequence spans 319 residues: Coproporphyrin III ferrochelatase 2 (319 aa).

Residues Tyr13, Arg30, 46-47 (RY), Ser54, and Tyr125 each bind Fe-coproporphyrin III. 2 residues coordinate Fe(2+): His181 and Glu262.

The protein belongs to the ferrochelatase family.

Its subcellular location is the cytoplasm. The enzyme catalyses Fe-coproporphyrin III + 2 H(+) = coproporphyrin III + Fe(2+). It participates in porphyrin-containing compound metabolism; protoheme biosynthesis. Involved in coproporphyrin-dependent heme b biosynthesis. Catalyzes the insertion of ferrous iron into coproporphyrin III to form Fe-coproporphyrin III. The sequence is that of Coproporphyrin III ferrochelatase 2 from Bacillus anthracis.